Here is a 461-residue protein sequence, read N- to C-terminus: Bifunctional protein GlmU (461 aa).

The segment at 1–229 is pyrophosphorylase; that stretch reads MLKKEINVVI…CKEILGVNNK (229 aa). Residues 11-14, K25, Q76, 81-82, 103-105, G140, E154, and N227 each bind UDP-N-acetyl-alpha-D-glucosamine; these read LAAG, GT, and YGD. Residue D105 coordinates Mg(2+). N227 is a binding site for Mg(2+). A linker region spans residues 230 to 250; sequence LQLSILEKIFRKKQVNDLLLS. The tract at residues 251-461 is N-acetyltransferase; it reads GVTLKDPNHF…PQKIIKKTDQ (211 aa). Residues R333 and K351 each coordinate UDP-N-acetyl-alpha-D-glucosamine. Residue H363 is the Proton acceptor of the active site. UDP-N-acetyl-alpha-D-glucosamine is bound by residues Y366 and N377. Residues A380, 386–387, and A423 contribute to the acetyl-CoA site; that span reads NY.

In the N-terminal section; belongs to the N-acetylglucosamine-1-phosphate uridyltransferase family. The protein in the C-terminal section; belongs to the transferase hexapeptide repeat family. Homotrimer. Mg(2+) is required as a cofactor.

The protein localises to the cytoplasm. The catalysed reaction is alpha-D-glucosamine 1-phosphate + acetyl-CoA = N-acetyl-alpha-D-glucosamine 1-phosphate + CoA + H(+). The enzyme catalyses N-acetyl-alpha-D-glucosamine 1-phosphate + UTP + H(+) = UDP-N-acetyl-alpha-D-glucosamine + diphosphate. It functions in the pathway nucleotide-sugar biosynthesis; UDP-N-acetyl-alpha-D-glucosamine biosynthesis; N-acetyl-alpha-D-glucosamine 1-phosphate from alpha-D-glucosamine 6-phosphate (route II): step 2/2. Its pathway is nucleotide-sugar biosynthesis; UDP-N-acetyl-alpha-D-glucosamine biosynthesis; UDP-N-acetyl-alpha-D-glucosamine from N-acetyl-alpha-D-glucosamine 1-phosphate: step 1/1. It participates in bacterial outer membrane biogenesis; LPS lipid A biosynthesis. Functionally, catalyzes the last two sequential reactions in the de novo biosynthetic pathway for UDP-N-acetylglucosamine (UDP-GlcNAc). The C-terminal domain catalyzes the transfer of acetyl group from acetyl coenzyme A to glucosamine-1-phosphate (GlcN-1-P) to produce N-acetylglucosamine-1-phosphate (GlcNAc-1-P), which is converted into UDP-GlcNAc by the transfer of uridine 5-monophosphate (from uridine 5-triphosphate), a reaction catalyzed by the N-terminal domain. The protein is Bifunctional protein GlmU of Buchnera aphidicola subsp. Schizaphis graminum (strain Sg).